Consider the following 101-residue polypeptide: Non-histone chromosomal protein HMG-14 (101 aa).

The interval 1 to 101 (MPKRKVSSAE…EAEEKEAKSD (101 aa)) is disordered. Ser-7 bears the ADP-ribosylserine mark. Phosphoserine is present on Ser-8. Lys-14 is modified (N6-acetyllysine). Phosphoserine is present on Ser-21. The residue at position 25 (Ser-25) is an ADP-ribosylserine; alternate. Position 25 is a phosphoserine; alternate (Ser-25). Lys-27 carries the N6-acetyllysine modification. Basic and acidic residues-rich tracts occupy residues 33 to 51 (VETK…DKKV) and 70 to 86 (ETKE…KNEE). A Phosphothreonine modification is found at Thr-82. Lys-83 bears the N6-acetyllysine mark. 3 positions are modified to phosphoserine: Ser-87, Ser-90, and Ser-100.

The protein belongs to the HMGN family. Interacts with transcriptional regulator SEHBP. In terms of processing, phosphorylation on Ser-21 and Ser-25 weakens binding to nucleosomes and increases the rate of H3 phosphorylation.

It is found in the nucleus. Binds to the inner side of the nucleosomal DNA thus altering the interaction between the DNA and the histone octamer. May be involved in the process which maintains transcribable genes in a unique chromatin conformation. Inhibits the phosphorylation of nucleosomal histones H3 and H2A by RPS6KA5/MSK1 and RPS6KA3/RSK2. This Bos taurus (Bovine) protein is Non-histone chromosomal protein HMG-14 (HMGN1).